The chain runs to 132 residues: Small ribosomal subunit protein uS8 (132 aa).

Belongs to the universal ribosomal protein uS8 family. In terms of assembly, part of the 30S ribosomal subunit. Contacts proteins S5 and S12.

Its function is as follows. One of the primary rRNA binding proteins, it binds directly to 16S rRNA central domain where it helps coordinate assembly of the platform of the 30S subunit. This is Small ribosomal subunit protein uS8 from Mycoplasmopsis pulmonis (strain UAB CTIP) (Mycoplasma pulmonis).